An 840-amino-acid chain; its full sequence is Translation initiation factor IF-2 (840 aa).

Over residues 95 to 143 (RSPDEIEAERQRELEEQRAAEEAERLKAEEAAARQRAEEEARKAEEAAR) the composition is skewed to basic and acidic residues. 2 disordered regions span residues 95-155 (RSPD…ATAG) and 173-256 (PAAV…PTGP). Low complexity predominate over residues 144 to 155 (AKAAQEAAATAG). 2 stretches are compositionally biased toward basic and acidic residues: residues 175-191 (AVEERKKEEPRRVPKRD) and 223-232 (STDEESDGYR). Over residues 233-247 (RGGRGGKSKLKKRNQ) the composition is skewed to basic residues. One can recognise a tr-type G domain in the interval 340-509 (TRAPVVTVMG…LLQAEVLELK (170 aa)). A G1 region spans residues 349 to 356 (GHVDHGKT). GTP is bound at residue 349–356 (GHVDHGKT). The G2 stretch occupies residues 374–378 (GITQH). A G3 region spans residues 395-398 (DTPG). GTP is bound by residues 395-399 (DTPGH) and 449-452 (NKID). The interval 449–452 (NKID) is G4. A G5 region spans residues 485 to 487 (SAK).

This sequence belongs to the TRAFAC class translation factor GTPase superfamily. Classic translation factor GTPase family. IF-2 subfamily.

It localises to the cytoplasm. In terms of biological role, one of the essential components for the initiation of protein synthesis. Protects formylmethionyl-tRNA from spontaneous hydrolysis and promotes its binding to the 30S ribosomal subunits. Also involved in the hydrolysis of GTP during the formation of the 70S ribosomal complex. This Pseudomonas aeruginosa (strain ATCC 15692 / DSM 22644 / CIP 104116 / JCM 14847 / LMG 12228 / 1C / PRS 101 / PAO1) protein is Translation initiation factor IF-2.